Here is a 327-residue protein sequence, read N- to C-terminus: L-lactate dehydrogenase (327 aa).

NAD(+)-binding positions include V18, D39, K44, Y69, and 83 to 84; that span reads GA. Residues Q86, R92, and 124–127 contribute to the substrate site; that span reads NPVD. NAD(+)-binding positions include 122-124 and S147; that span reads AAN. 152 to 155 lines the substrate pocket; the sequence is DSAR. R157 and H172 together coordinate beta-D-fructose 1,6-bisphosphate. H179 (proton acceptor) is an active-site residue. The residue at position 224 (Y224) is a Phosphotyrosine. Position 233 (T233) interacts with substrate.

This sequence belongs to the LDH/MDH superfamily. LDH family. Homotetramer.

It is found in the cytoplasm. It catalyses the reaction (S)-lactate + NAD(+) = pyruvate + NADH + H(+). Its pathway is fermentation; pyruvate fermentation to lactate; (S)-lactate from pyruvate: step 1/1. Allosterically activated by fructose 1,6-bisphosphate (FBP). Functionally, catalyzes the conversion of lactate to pyruvate. The chain is L-lactate dehydrogenase from Streptococcus equi subsp. zooepidemicus (strain H70).